A 302-amino-acid chain; its full sequence is RuBisCO operon transcriptional regulator (302 aa).

One can recognise an HTH lysR-type domain in the interval 1 to 60 (MHVSLRQLRVFEAVARHNSYTRAAEELHLSQPAVSMQVRQLEDEIGLSLFERLGKQVVLT). A DNA-binding region (H-T-H motif) is located at residues 20 to 39 (YTRAAEELHLSQPAVSMQVR).

This sequence belongs to the LysR transcriptional regulatory family.

Trans-acting transcriptional regulator of RuBisCO genes (rbcAB) expression. The polypeptide is RuBisCO operon transcriptional regulator (rbcR) (Allochromatium vinosum (Chromatium vinosum)).